The sequence spans 47 residues: Ruminococcin-A (47 aa).

The signal sequence occupies residues 1-23; the sequence is MRNDVLTLTNPMEENELEQILGG. Threonine 30 and threonine 39 each carry 2,3-didehydrobutyrine. A cross-link (beta-methyllanthionine (Thr-Cys)) is located at residues 30 to 35; that stretch reads TISHEC. A cross-link (lanthionine (Ser-Cys)) is located at residues 32–46; it reads SHECNMNTWQFLFTC. Positions 45–47 form a cross-link, beta-methyllanthionine (Thr-Cys); that stretch reads TCC.

The protein belongs to the type A lantibiotic family. Maturation of lantibiotics involves the enzymatic conversion of Thr, and Ser into dehydrated AA and the formation of thioether bonds with cysteine. This is followed by membrane translocation and cleavage of the modified precursor.

Its subcellular location is the secreted. In terms of biological role, lanthionine-containing peptide antibiotic (lantibiotic) active on Gram-positive bacteria. The bactericidal activity of lantibiotics is based on depolarization of energized bacterial cytoplasmic membranes, initiated by the formation of aqueous transmembrane pores. Ruminococcin A is a broad spectrum bacteriocin exhibiting activity against a wide range of pathogenic clostridia and B.longum. The sequence is that of Ruminococcin-A (rumA1) from Blautia hansenii (Ruminococcus hansenii).